The following is a 580-amino-acid chain: Rap guanine nucleotide exchange factor 5 (580 aa).

In terms of domain architecture, N-terminal Ras-GEF spans 67-200 (DRYVVVSGTP…ELKEFQKILG (134 aa)). Positions 344 to 579 (NTWDLALELM…FELSHRLEPR (236 aa)) constitute a Ras-GEF domain.

In the embryo, expressed in young neurons of the developing telencephalon, diencephalon and hindbrain. Not expressed in progenitor cells in the ventricular zone.

The protein resides in the nucleus. Guanine nucleotide exchange factor (GEF) for RAP1A, RAP2A and MRAS/M-Ras-GTP. Its association with MRAS inhibits Rap1 activation. This is Rap guanine nucleotide exchange factor 5 (Rapgef5) from Rattus norvegicus (Rat).